Here is a 425-residue protein sequence, read N- to C-terminus: Adenylosuccinate synthetase (425 aa).

Residues 12–18 and 40–42 each bind GTP; these read GDEGKGK and GHT. The active-site Proton acceptor is the aspartate 13. Residues aspartate 13 and glycine 40 each contribute to the Mg(2+) site. Residues 13-16, 38-41, threonine 130, arginine 144, glutamine 224, threonine 239, and arginine 301 each bind IMP; these read DEGK and NAGH. Residue histidine 41 is the Proton donor of the active site. 297–303 serves as a coordination point for substrate; the sequence is TVSNRRR. Residues arginine 303, 329-331, and 411-413 each bind GTP; these read KLD and STS.

It belongs to the adenylosuccinate synthetase family. As to quaternary structure, homodimer. Mg(2+) is required as a cofactor.

Its subcellular location is the cytoplasm. It catalyses the reaction IMP + L-aspartate + GTP = N(6)-(1,2-dicarboxyethyl)-AMP + GDP + phosphate + 2 H(+). It functions in the pathway purine metabolism; AMP biosynthesis via de novo pathway; AMP from IMP: step 1/2. Functionally, plays an important role in the de novo pathway of purine nucleotide biosynthesis. Catalyzes the first committed step in the biosynthesis of AMP from IMP. The sequence is that of Adenylosuccinate synthetase from Wolbachia pipientis subsp. Culex pipiens (strain wPip).